The sequence spans 437 residues: Protein translocase subunit SecY (437 aa).

Transmembrane regions (helical) follow at residues leucine 19–valine 39, leucine 69–leucine 89, valine 122–phenylalanine 142, isoleucine 157–leucine 177, glycine 189–isoleucine 209, tryptophan 219–valine 239, glycine 275–phenylalanine 295, histidine 318–phenylalanine 338, glycine 378–alanine 398, and glutamine 400–valine 420.

It belongs to the SecY/SEC61-alpha family. In terms of assembly, component of the Sec protein translocase complex. Heterotrimer consisting of SecY, SecE and SecG subunits. The heterotrimers can form oligomers, although 1 heterotrimer is thought to be able to translocate proteins. Interacts with the ribosome. Interacts with SecDF, and other proteins may be involved. Interacts with SecA.

The protein resides in the cell membrane. Functionally, the central subunit of the protein translocation channel SecYEG. Consists of two halves formed by TMs 1-5 and 6-10. These two domains form a lateral gate at the front which open onto the bilayer between TMs 2 and 7, and are clamped together by SecE at the back. The channel is closed by both a pore ring composed of hydrophobic SecY resides and a short helix (helix 2A) on the extracellular side of the membrane which forms a plug. The plug probably moves laterally to allow the channel to open. The ring and the pore may move independently. This chain is Protein translocase subunit SecY, found in Streptomyces scabiei.